Reading from the N-terminus, the 361-residue chain is MQQTVIVAMSGGVDSSVVAYLFKKFTNYKVIGLFMKNWEEDSEGGLCSSTKDYEDVERVCLQLDIPYYTVSFAKEYRERVFARFLKEYSLGYTPNPDILCNREIKFDLLQKKVQELGGDYLATGHYCRLNTELQETQLLRGCDPQKDQSYFLSGTPKSALHNVLFPLGEMNKTEVRAIAAQAALPTAEKKDSTGICFIGKRPFKEFLEKFLPNKTGNVIDWDTKEIVGQHQGAHYYTIGQRRGLDLGGSEKPCYVVGKNIEENSIYIVRGEDHPQLYLRELTARELNWFTPPKSGCHCSAKVRYRSPDEACTIDYSSGDEVKVRFSQPVKAVTPGQTIAFYQGDTCLGSGVIDVPMIPSEG.

Residues 8–15 (AMSGGVDS) and M35 each bind ATP. The segment at 95–97 (NPD) is interaction with target base in tRNA. C100 functions as the Nucleophile in the catalytic mechanism. The cysteines at positions 100 and 196 are disulfide-linked. An ATP-binding site is contributed by G124. The tract at residues 146–148 (KDQ) is interaction with tRNA. Catalysis depends on C196, which acts as the Cysteine persulfide intermediate. The interval 303–304 (RY) is interaction with tRNA.

It belongs to the MnmA/TRMU family.

It localises to the cytoplasm. The catalysed reaction is S-sulfanyl-L-cysteinyl-[protein] + uridine(34) in tRNA + AH2 + ATP = 2-thiouridine(34) in tRNA + L-cysteinyl-[protein] + A + AMP + diphosphate + H(+). Its function is as follows. Catalyzes the 2-thiolation of uridine at the wobble position (U34) of tRNA, leading to the formation of s(2)U34. This is tRNA-specific 2-thiouridylase MnmA from Chlamydia pneumoniae (Chlamydophila pneumoniae).